The primary structure comprises 618 residues: Dihydroxy-acid dehydratase (618 aa).

Aspartate 81 is a binding site for Mg(2+). Position 122 (cysteine 122) interacts with [2Fe-2S] cluster. 2 residues coordinate Mg(2+): aspartate 123 and lysine 124. Residue lysine 124 is modified to N6-carboxylysine. Position 195 (cysteine 195) interacts with [2Fe-2S] cluster. Glutamate 491 lines the Mg(2+) pocket. The active-site Proton acceptor is serine 517.

Belongs to the IlvD/Edd family. As to quaternary structure, homodimer. It depends on [2Fe-2S] cluster as a cofactor. The cofactor is Mg(2+).

The enzyme catalyses (2R)-2,3-dihydroxy-3-methylbutanoate = 3-methyl-2-oxobutanoate + H2O. It catalyses the reaction (2R,3R)-2,3-dihydroxy-3-methylpentanoate = (S)-3-methyl-2-oxopentanoate + H2O. The protein operates within amino-acid biosynthesis; L-isoleucine biosynthesis; L-isoleucine from 2-oxobutanoate: step 3/4. It participates in amino-acid biosynthesis; L-valine biosynthesis; L-valine from pyruvate: step 3/4. Its function is as follows. Functions in the biosynthesis of branched-chain amino acids. Catalyzes the dehydration of (2R,3R)-2,3-dihydroxy-3-methylpentanoate (2,3-dihydroxy-3-methylvalerate) into 2-oxo-3-methylpentanoate (2-oxo-3-methylvalerate) and of (2R)-2,3-dihydroxy-3-methylbutanoate (2,3-dihydroxyisovalerate) into 2-oxo-3-methylbutanoate (2-oxoisovalerate), the penultimate precursor to L-isoleucine and L-valine, respectively. The protein is Dihydroxy-acid dehydratase of Dechloromonas aromatica (strain RCB).